Reading from the N-terminus, the 130-residue chain is Small ribosomal subunit protein uS11 (130 aa).

It belongs to the universal ribosomal protein uS11 family. In terms of assembly, part of the 30S ribosomal subunit. Interacts with proteins S7 and S18. Binds to IF-3.

Located on the platform of the 30S subunit, it bridges several disparate RNA helices of the 16S rRNA. Forms part of the Shine-Dalgarno cleft in the 70S ribosome. This is Small ribosomal subunit protein uS11 from Gloeobacter violaceus (strain ATCC 29082 / PCC 7421).